The sequence spans 551 residues: Glucans biosynthesis protein D (551 aa).

Residues 1 to 32 (MNRRRFIKGSMAMAAVCGSSGIASLFSQAAFA) constitute a signal peptide (tat-type signal).

Belongs to the OpgD/OpgG family. Predicted to be exported by the Tat system. The position of the signal peptide cleavage has not been experimentally proven.

Its subcellular location is the periplasm. Its pathway is glycan metabolism; osmoregulated periplasmic glucan (OPG) biosynthesis. Probably involved in the control of the structural glucose backbone of osmoregulated periplasmic glucans (OPGs). In Salmonella enteritidis PT4 (strain P125109), this protein is Glucans biosynthesis protein D.